The primary structure comprises 376 residues: Lipoyl synthase, mitochondrial (376 aa).

Positions 103, 108, 114, 134, 138, 141, and 349 each coordinate [4Fe-4S] cluster. The Radical SAM core domain occupies 119-338 (EHGTQTATIM…EDRGNQLGFL (220 aa)).

Belongs to the radical SAM superfamily. Lipoyl synthase family. [4Fe-4S] cluster is required as a cofactor.

The protein localises to the mitochondrion. The catalysed reaction is [[Fe-S] cluster scaffold protein carrying a second [4Fe-4S](2+) cluster] + N(6)-octanoyl-L-lysyl-[protein] + 2 oxidized [2Fe-2S]-[ferredoxin] + 2 S-adenosyl-L-methionine + 4 H(+) = [[Fe-S] cluster scaffold protein] + N(6)-[(R)-dihydrolipoyl]-L-lysyl-[protein] + 4 Fe(3+) + 2 hydrogen sulfide + 2 5'-deoxyadenosine + 2 L-methionine + 2 reduced [2Fe-2S]-[ferredoxin]. Its pathway is protein modification; protein lipoylation via endogenous pathway; protein N(6)-(lipoyl)lysine from octanoyl-[acyl-carrier-protein]: step 2/2. In terms of biological role, catalyzes the radical-mediated insertion of two sulfur atoms into the C-6 and C-8 positions of the octanoyl moiety bound to the lipoyl domains of lipoate-dependent enzymes, thereby converting the octanoylated domains into lipoylated derivatives. The polypeptide is Lipoyl synthase, mitochondrial (Drosophila ananassae (Fruit fly)).